The primary structure comprises 500 residues: Carnosic acid synthase (500 aa).

Residues 4–24 (LILLSLAFLASCVVAYSRRRP) form a helical membrane-spanning segment. Heme is bound at residue Cys-443.

This sequence belongs to the cytochrome P450 family. Heme is required as a cofactor. As to expression, mostly expressed in young leaves, particularly in glandular trichomes.

It is found in the membrane. It catalyses the reaction 11-hydroxyferruginol + 3 reduced [NADPH--hemoprotein reductase] + 3 O2 = carnosate + 3 oxidized [NADPH--hemoprotein reductase] + 4 H2O + 4 H(+). The enzyme catalyses miltiradiene + 2 reduced [NADPH--hemoprotein reductase] + 2 O2 = miltiradien-20-al + 2 oxidized [NADPH--hemoprotein reductase] + 3 H2O + 2 H(+). It carries out the reaction ferruginol + 3 reduced [NADPH--hemoprotein reductase] + 3 O2 = pisiferate + 3 oxidized [NADPH--hemoprotein reductase] + 4 H2O + 4 H(+). It participates in secondary metabolite biosynthesis; terpenoid biosynthesis. Its function is as follows. Monooxygenase involved in the biosynthesis of carnosate, a potent antioxidant labdane-related diterpene natural product. Catalyzes the oxidation of 11-hydroxyferruginol to produce carnosate. Mediates the conversion of miltiradien into miltiradien-20-al. Also involved in the production of pisiferic acid and derivative products from ferruginol. This chain is Carnosic acid synthase, found in Salvia fruticosa (Greek sage).